Consider the following 297-residue polypeptide: 4-hydroxy-tetrahydrodipicolinate synthase (297 aa).

Residue threonine 47 participates in pyruvate binding. Tyrosine 135 functions as the Proton donor/acceptor in the catalytic mechanism. The active-site Schiff-base intermediate with substrate is lysine 163. Isoleucine 205 provides a ligand contact to pyruvate.

This sequence belongs to the DapA family. In terms of assembly, homotetramer; dimer of dimers.

It localises to the cytoplasm. The catalysed reaction is L-aspartate 4-semialdehyde + pyruvate = (2S,4S)-4-hydroxy-2,3,4,5-tetrahydrodipicolinate + H2O + H(+). The protein operates within amino-acid biosynthesis; L-lysine biosynthesis via DAP pathway; (S)-tetrahydrodipicolinate from L-aspartate: step 3/4. Catalyzes the condensation of (S)-aspartate-beta-semialdehyde [(S)-ASA] and pyruvate to 4-hydroxy-tetrahydrodipicolinate (HTPA). This chain is 4-hydroxy-tetrahydrodipicolinate synthase, found in Dehalococcoides mccartyi (strain ATCC BAA-2266 / KCTC 15142 / 195) (Dehalococcoides ethenogenes (strain 195)).